Consider the following 103-residue polypeptide: MAAKIRQNDEVIVLTGKDKGKRGKVTQVLPNGKVIVEGVKIITKHEKPVPALGKEGGLVKKEAAIDVSNVAIFNPKTNKADRVGFRFEDGKKVRFFKSNNEII.

This sequence belongs to the universal ribosomal protein uL24 family. Part of the 50S ribosomal subunit.

Functionally, one of two assembly initiator proteins, it binds directly to the 5'-end of the 23S rRNA, where it nucleates assembly of the 50S subunit. In terms of biological role, one of the proteins that surrounds the polypeptide exit tunnel on the outside of the subunit. In Mannheimia succiniciproducens (strain KCTC 0769BP / MBEL55E), this protein is Large ribosomal subunit protein uL24.